Here is a 1036-residue protein sequence, read N- to C-terminus: Beta-galactosidase (1036 aa).

The substrate site is built by Asn-97 and Asp-197. Asp-197 lines the Na(+) pocket. Glu-411, His-413, and Glu-456 together coordinate Mg(2+). Substrate-binding positions include Glu-456 and 532–535 (EYAH). The active-site Proton donor is Glu-456. The active-site Nucleophile is Glu-532. Asn-592 contributes to the Mg(2+) binding site. Phe-596 and Asp-599 together coordinate Na(+). Substrate is bound by residues Asp-599 and Trp-1006.

It belongs to the glycosyl hydrolase 2 family. In terms of assembly, homotetramer. Mg(2+) serves as cofactor. Requires Na(+) as cofactor.

The enzyme catalyses Hydrolysis of terminal non-reducing beta-D-galactose residues in beta-D-galactosides.. This chain is Beta-galactosidase, found in Leuconostoc mesenteroides subsp. mesenteroides (strain ATCC 8293 / DSM 20343 / BCRC 11652 / CCM 1803 / JCM 6124 / NCDO 523 / NBRC 100496 / NCIMB 8023 / NCTC 12954 / NRRL B-1118 / 37Y).